The primary structure comprises 135 residues: Large ribosomal subunit protein uL16c (135 aa).

The protein belongs to the universal ribosomal protein uL16 family. In terms of assembly, part of the 50S ribosomal subunit.

The protein resides in the plastid. It localises to the chloroplast. In Acorus calamus var. americanus (American sweet flag), this protein is Large ribosomal subunit protein uL16c.